A 207-amino-acid polypeptide reads, in one-letter code: MHAQGFLCSKHAMSEPIRLIVGLGNPGPDYETTRHNAGFWLADRLADDLRATFALEKGFMGMVAKARFEGENVLLLKPITYMNRSGQAVGALARFYKLAPEQVLVLHDELDLLPGQVKMKQGGGHAGHNGLKDIQAALGTPNFWRLRLGIGHPRTLNLAQQVADFVLHPPRRDEQAEIDTVIDRCRAVVPALLRGDFAQATRQLHTA.

Position 30 (tyrosine 30) interacts with tRNA. Histidine 35 (proton acceptor) is an active-site residue. TRNA-binding residues include tyrosine 81, asparagine 83, and asparagine 129.

This sequence belongs to the PTH family. In terms of assembly, monomer.

The protein resides in the cytoplasm. It catalyses the reaction an N-acyl-L-alpha-aminoacyl-tRNA + H2O = an N-acyl-L-amino acid + a tRNA + H(+). Hydrolyzes ribosome-free peptidyl-tRNAs (with 1 or more amino acids incorporated), which drop off the ribosome during protein synthesis, or as a result of ribosome stalling. Functionally, catalyzes the release of premature peptidyl moieties from peptidyl-tRNA molecules trapped in stalled 50S ribosomal subunits, and thus maintains levels of free tRNAs and 50S ribosomes. The sequence is that of Peptidyl-tRNA hydrolase from Bordetella avium (strain 197N).